We begin with the raw amino-acid sequence, 426 residues long: 3-phosphoshikimate 1-carboxyvinyltransferase (426 aa).

3-phosphoshikimate is bound by residues Lys22, Ser23, and Arg27. Residue Lys22 coordinates phosphoenolpyruvate. Gly96 and Arg124 together coordinate phosphoenolpyruvate. Positions 170, 171, 172, 198, 314, 337, and 341 each coordinate 3-phosphoshikimate. Gln172 serves as a coordination point for phosphoenolpyruvate. Residue Asp314 is the Proton acceptor of the active site. Residues Arg345, Arg387, and Lys412 each coordinate phosphoenolpyruvate.

Belongs to the EPSP synthase family. Monomer.

It localises to the cytoplasm. It carries out the reaction 3-phosphoshikimate + phosphoenolpyruvate = 5-O-(1-carboxyvinyl)-3-phosphoshikimate + phosphate. It participates in metabolic intermediate biosynthesis; chorismate biosynthesis; chorismate from D-erythrose 4-phosphate and phosphoenolpyruvate: step 6/7. Functionally, catalyzes the transfer of the enolpyruvyl moiety of phosphoenolpyruvate (PEP) to the 5-hydroxyl of shikimate-3-phosphate (S3P) to produce enolpyruvyl shikimate-3-phosphate and inorganic phosphate. This chain is 3-phosphoshikimate 1-carboxyvinyltransferase, found in Shewanella sp. (strain ANA-3).